Here is a 571-residue protein sequence, read N- to C-terminus: Transcription factor ABORTED MICROSPORES (571 aa).

Residues Asn275–Arg284 are compositionally biased toward basic and acidic residues. Disordered regions lie at residues Asn275–Arg321, Glu365–Asn390, and Asp536–Gln571. In terms of domain architecture, bHLH spans Gly310–Leu359. Residues Asp368–Asp378 are compositionally biased toward acidic residues. A compositionally biased stretch (polar residues) spans Asn381 to Asn390. Basic residues predominate over residues Ala556 to Gln571.

In terms of assembly, homodimer. Interacts with ASHR3. Mostly expressed in closed, post-meiotic buds, and, to a lower extent, in pre-meiotic buds. Detected in leaves, stems, and flowers.

The protein resides in the nucleus. Functionally, transcription factor. Plays a crucial role in tapetum development. Required for male fertility and pollen differentiation, especially during the post-meiotic transcriptional regulation of microspore development within the developing anther. Binds E-box regions in the AHL16/TEK promoter. This Arabidopsis thaliana (Mouse-ear cress) protein is Transcription factor ABORTED MICROSPORES (AMS).